We begin with the raw amino-acid sequence, 1883 residues long: AF4/FMR2 family member lilli (1883 aa).

Low complexity predominate over residues 1–45 (MAQQQQQQHLQQQQQQHHQQQQLQQLQQQQQLPQYNNNLYNLNYN). Disordered stretches follow at residues 1–88 (MAQQ…SEGD), 140–311 (INST…EKDI), 329–381 (SIAA…SCTT), 449–540 (MPTP…HHQH), 609–654 (LGGG…HLSR), 796–827 (SISS…TLQI), 844–901 (MQQK…KKHA), 922–962 (TAAA…LAKG), 992–1018 (VAGS…LHAA), 1039–1075 (TAAA…ATAT), 1115–1145 (KNNR…QHKQ), 1170–1238 (QHQQ…KSDK), 1358–1413 (YAAE…GART), 1450–1510 (EHGV…DQVS), 1543–1583 (ANGS…KATT), 1595–1641 (QTST…PPSD), and 1783–1803 (PSNS…RIVP). Residues 57 to 80 (REKYERQQGIQSDDRETSLFEAPR) show a composition bias toward basic and acidic residues. Composition is skewed to low complexity over residues 140–154 (INST…SLLP), 161–178 (QQQQ…QQQQ), 223–253 (SASS…ASTA), and 362–381 (PLNS…SCTT). The span at 450–462 (PTPPKASPTPPTA) shows a compositional bias: pro residues. Threonine 458 is subject to Phosphothreonine. The segment covering 466–479 (LKSEKNHSLEKQDS) has biased composition (basic and acidic residues). Residues 481–491 (LENDLELSESD) show a composition bias toward acidic residues. 2 positions are modified to phosphoserine: serine 488 and serine 490. Low complexity predominate over residues 500-540 (SAGNSSNSSETDSSESGSEASSKGEAQQQQQQQQQLLHHQH). Over residues 609–625 (LGGGGGSGSTGGGGGSS) the composition is skewed to gly residues. Composition is skewed to low complexity over residues 626-639 (SSGM…SSSN) and 796-813 (SISS…SAAG). Residues 867–877 (PRQKKPRKKKM) show a composition bias toward basic residues. Phosphoserine occurs at positions 887 and 888. The segment at residues 930-942 (KKGRGRPRKQQQQ) is a DNA-binding region (a.T hook). Low complexity predominate over residues 939 to 962 (QQQQLQQTQSGNLSSASAGSLAKG). Serine 953 and serine 955 each carry phosphoserine. 5 stretches are compositionally biased toward low complexity: residues 1124 to 1145 (SSSN…QHKQ), 1170 to 1186 (QHQQ…QQQQ), 1200 to 1222 (SSSS…SSSS), 1362 to 1376 (QQQQ…QQLH), and 1385 to 1399 (HYQQ…KAQQ). Residues 1450-1467 (EHGVKPEPELDAGYEAKY) show a composition bias toward basic and acidic residues. Serine 1546 carries the post-translational modification Phosphoserine. A Phosphothreonine modification is found at threonine 1548. Composition is skewed to low complexity over residues 1558 to 1583 (QQQQ…KATT) and 1595 to 1606 (QTSTTATQQPTT). The span at 1614-1625 (TPPPVAPPPPPR) shows a compositional bias: pro residues. Positions 1783–1794 (PSNSVGSQGSGS) are enriched in low complexity.

The protein belongs to the AF4 family.

The protein localises to the nucleus. Its function is as follows. Has a role in transcriptional regulation. Acts in parallel with the Ras/MAPK and the PI3K/PKB pathways in the control of cell identity and cellular growth. Essential for regulation of the cytoskeleton and cell growth but not for cell proliferation or growth rate. Required specifically for the microtubule-based basal transport of lipid droplets. Plays a partially redundant function downstream of Raf in cell fate specification in the developing eye. Pair-rule protein that regulates embryonic cellularization, gastrulation and segmentation. The sequence is that of AF4/FMR2 family member lilli from Drosophila grimshawi (Hawaiian fruit fly).